An 85-amino-acid chain; its full sequence is Defensin-like protein 11 (85 aa).

The signal sequence occupies residues 1–29 (MGKTISFSAIILVFLLVSTGLMKQGDAQA). Cystine bridges form between Cys32-Cys84, Cys44-Cys68, Cys54-Cys75, and Cys58-Cys77.

The protein belongs to the DEFL family.

It localises to the secreted. This is Defensin-like protein 11 from Arabidopsis thaliana (Mouse-ear cress).